The following is a 615-amino-acid chain: Dihydroxy-acid dehydratase (615 aa).

Aspartate 85 contacts Mg(2+). Cysteine 126 is a [2Fe-2S] cluster binding site. The Mg(2+) site is built by aspartate 127 and lysine 128. Lysine 128 carries the post-translational modification N6-carboxylysine. Cysteine 199 is a binding site for [2Fe-2S] cluster. Glutamate 495 lines the Mg(2+) pocket. Serine 521 acts as the Proton acceptor in catalysis.

This sequence belongs to the IlvD/Edd family. In terms of assembly, homodimer. [2Fe-2S] cluster serves as cofactor. The cofactor is Mg(2+).

The enzyme catalyses (2R)-2,3-dihydroxy-3-methylbutanoate = 3-methyl-2-oxobutanoate + H2O. The catalysed reaction is (2R,3R)-2,3-dihydroxy-3-methylpentanoate = (S)-3-methyl-2-oxopentanoate + H2O. The protein operates within amino-acid biosynthesis; L-isoleucine biosynthesis; L-isoleucine from 2-oxobutanoate: step 3/4. It functions in the pathway amino-acid biosynthesis; L-valine biosynthesis; L-valine from pyruvate: step 3/4. Functions in the biosynthesis of branched-chain amino acids. Catalyzes the dehydration of (2R,3R)-2,3-dihydroxy-3-methylpentanoate (2,3-dihydroxy-3-methylvalerate) into 2-oxo-3-methylpentanoate (2-oxo-3-methylvalerate) and of (2R)-2,3-dihydroxy-3-methylbutanoate (2,3-dihydroxyisovalerate) into 2-oxo-3-methylbutanoate (2-oxoisovalerate), the penultimate precursor to L-isoleucine and L-valine, respectively. This chain is Dihydroxy-acid dehydratase, found in Mannheimia succiniciproducens (strain KCTC 0769BP / MBEL55E).